Consider the following 1060-residue polypeptide: Histone lysine demethylase PHF8 (1060 aa).

Residues 41-92 (PVYCLCRLPYDVTRFMIECDMCQDWFHGSCVGVEEEKAADIDLYHCPNCEVL) form a PHD-type zinc finger. Ser69 is subject to Phosphoserine; by CDK1. A disordered region spans residues 100-120 (KRRGSSKGHDTHKGKPVKTGS). The interval 101-115 (RRGSSKGHDTHKGKP) is linker. Phosphoserine; by CDK1 is present on Ser120. The JmjC domain occupies 231-387 (FSDTRLSNLV…MQLKAYEIEK (157 aa)). Thr280 contributes to the substrate binding site. The Fe cation site is built by His283 and Asp285. Lys300 is a substrate binding site. His355 serves as a coordination point for Fe cation. The span at 508–517 (AHSTSVSMSR) shows a compositional bias: polar residues. The disordered stretch occupies residues 508 to 534 (AHSTSVSMSRLSLPSKNGSKKKGLKPK). Ser651 carries the phosphoserine modification. Tyr704 is modified (phosphotyrosine). 2 positions are modified to phosphothreonine: Thr705 and Thr706. Position 722 is a phosphoserine (Ser722). Disordered regions lie at residues 768-840 (QSSS…EQDS), 852-902 (YPSL…GTRV), and 915-1046 (KLAQ…KQRL). Low complexity-rich tracts occupy residues 769 to 778 (SSSSSPATSS) and 785 to 804 (GGQDRSSGSSSSGLGTVSNS). Phosphoserine occurs at positions 804, 826, 834, 854, 857, and 880. The segment covering 826–839 (SEEEEENASLDEQD) has biased composition (acidic residues). Residues 891–900 (KQDRPVREGT) are compositionally biased toward basic and acidic residues. A compositionally biased stretch (basic residues) spans 924–934 (AQKKKYIKKKP). A compositionally biased stretch (polar residues) spans 1018 to 1030 (RRPSVGSQSNQAG).

The protein belongs to the JHDM1 histone demethylase family. JHDM1D subfamily. Interacts with POLR1B, UBTF, SETD1A, HCFC1, E2F1 and ZNF711. Interacts with ZNF263; recruited to the SIX3 promoter along with other proteins involved in chromatin modification and transcriptional corepression where it contributes to transcriptional repression. Fe(2+) is required as a cofactor. Phosphorylation at Ser-69 and Ser-120 are required for dissociation from chromatin and accumulation of H4K20Me1 levels during prophase.

Its subcellular location is the nucleus. The protein localises to the nucleolus. It carries out the reaction N(6),N(6)-dimethyl-L-lysyl(36)-[histone H3] + 2 2-oxoglutarate + 2 O2 = L-lysyl(36)-[histone H3] + 2 formaldehyde + 2 succinate + 2 CO2. It catalyses the reaction N(6),N(6)-dimethyl-L-lysyl(9)-[histone H3] + 2 2-oxoglutarate + 2 O2 = L-lysyl(9)-[histone H3] + 2 formaldehyde + 2 succinate + 2 CO2. Histone lysine demethylase with selectivity for the di- and monomethyl states that plays a key role cell cycle progression, rDNA transcription and brain development. Demethylates mono- and dimethylated histone H3 'Lys-9' residue (H3K9Me1 and H3K9Me2), dimethylated H3 'Lys-27' (H3K27Me2) and monomethylated histone H4 'Lys-20' residue (H4K20Me1). Acts as a transcription activator as H3K9Me1, H3K9Me2, H3K27Me2 and H4K20Me1 are epigenetic repressive marks. Involved in cell cycle progression by being required to control G1-S transition. Acts as a coactivator of rDNA transcription, by activating polymerase I (pol I) mediated transcription of rRNA genes. Required for brain development, probably by regulating expression of neuron-specific genes. Only has activity toward H4K20Me1 when nucleosome is used as a substrate and when not histone octamer is used as substrate. May also have weak activity toward dimethylated H3 'Lys-36' (H3K36Me2), however, the relevance of this result remains unsure in vivo. Specifically binds trimethylated 'Lys-4' of histone H3 (H3K4me3), affecting histone demethylase specificity: has weak activity toward H3K9Me2 in absence of H3K4me3, while it has high activity toward H3K9me2 when binding H3K4me3. Positively modulates transcription of histone demethylase KDM5C, acting synergistically with transcription factor ARX; synergy may be related to enrichment of histone H3K4me3 in regulatory elements. The sequence is that of Histone lysine demethylase PHF8 (PHF8) from Homo sapiens (Human).